The primary structure comprises 132 residues: Interleukin-13 (132 aa).

Positions 1 to 18 (MALLLTTVIALTCLGGFA) are cleaved as a signal peptide. 4 N-linked (GlcNAc...) asparagine glycosylation sites follow: Asn38, Asn49, Asn57, and Asn72. Intrachain disulfides connect Cys48–Cys76 and Cys64–Cys90.

It belongs to the IL-4/IL-13 family. As to quaternary structure, interacts with IL13RA2.

The protein resides in the secreted. Its function is as follows. Cytokine that plays important roles in allergic inflammation and immune response to parasite infection. Synergizes with IL2 in regulating interferon-gamma synthesis. Stimulates B-cell proliferation, and activation of eosinophils, basophils, and mast cells. Plays an important role in controlling IL33 activity by modulating the production of transmembrane and soluble forms of interleukin-1 receptor-like 1/IL1RL1. Displays the capacity to antagonize Th1-driven proinflammatory immune response and downregulates synthesis of many proinflammatory cytokines including IL1, IL6, IL10, IL12 and TNF-alpha through a mechanism that partially involves suppression of NF-kappa-B. Also functions on nonhematopoietic cells, including endothelial cells where it induces vascular cell adhesion protein 1/VCAM1, which is important in the recruitment of eosinophils. Exerts its biological effects through its receptors which comprises the IL4R chain and the IL13RA1 chain, to activate JAK1 and TYK2, leading to the activation of STAT6. Aside from IL13RA1, another receptor IL13RA2 acts as a high affinity decoy for IL13 and mediates internalization and depletion of extracellular IL13. The sequence is that of Interleukin-13 (IL13) from Macaca mulatta (Rhesus macaque).